The sequence spans 145 residues: MELPLGSDLARLVRVWRALVDHRLKPLELTQTHWVTLHNIYHLPPGQSQIQLAKAIGIEQPSLVRTLDQLEEKGLITRHVCAHDRRAKRIMLTESAEPIIQAVNGVISHTRNEVLFGITPEQVDELALLVARLEKNILALHENQA.

One can recognise an HTH marR-type domain in the interval 2 to 135 (ELPLGSDLAR…LALLVARLEK (134 aa)). Positions 49-72 (QIQLAKAIGIEQPSLVRTLDQLEE) form a DNA-binding region, H-T-H motif.

It belongs to the SlyA family. In terms of assembly, homodimer.

In terms of biological role, transcription regulator that can specifically activate or repress expression of target genes. The chain is Transcriptional regulator SlyA from Pectobacterium carotovorum subsp. carotovorum (strain PC1).